Consider the following 224-residue polypeptide: Phosphoglycolate phosphatase (224 aa).

The active-site Nucleophile is the Asp-10. Residues Asp-10, Asp-12, and Asp-176 each coordinate Mg(2+).

The protein belongs to the HAD-like hydrolase superfamily. CbbY/CbbZ/Gph/YieH family. The cofactor is Mg(2+).

The catalysed reaction is 2-phosphoglycolate + H2O = glycolate + phosphate. It participates in organic acid metabolism; glycolate biosynthesis; glycolate from 2-phosphoglycolate: step 1/1. Specifically catalyzes the dephosphorylation of 2-phosphoglycolate. Is involved in the dissimilation of the intracellular 2-phosphoglycolate formed during the DNA repair of 3'-phosphoglycolate ends, a major class of DNA lesions induced by oxidative stress. This is Phosphoglycolate phosphatase from Pasteurella multocida (strain Pm70).